The chain runs to 378 residues: UDP-N-acetylglucosamine--N-acetylmuramyl-(pentapeptide) pyrophosphoryl-undecaprenol N-acetylglucosamine transferase (378 aa).

UDP-N-acetyl-alpha-D-glucosamine contacts are provided by residues 24-26 (TAG), N144, R181, S215, and Q310.

This sequence belongs to the glycosyltransferase 28 family. MurG subfamily.

It localises to the cell membrane. The enzyme catalyses di-trans,octa-cis-undecaprenyl diphospho-N-acetyl-alpha-D-muramoyl-L-alanyl-D-glutamyl-meso-2,6-diaminopimeloyl-D-alanyl-D-alanine + UDP-N-acetyl-alpha-D-glucosamine = di-trans,octa-cis-undecaprenyl diphospho-[N-acetyl-alpha-D-glucosaminyl-(1-&gt;4)]-N-acetyl-alpha-D-muramoyl-L-alanyl-D-glutamyl-meso-2,6-diaminopimeloyl-D-alanyl-D-alanine + UDP + H(+). Its pathway is cell wall biogenesis; peptidoglycan biosynthesis. In terms of biological role, cell wall formation. Catalyzes the transfer of a GlcNAc subunit on undecaprenyl-pyrophosphoryl-MurNAc-pentapeptide (lipid intermediate I) to form undecaprenyl-pyrophosphoryl-MurNAc-(pentapeptide)GlcNAc (lipid intermediate II). This is UDP-N-acetylglucosamine--N-acetylmuramyl-(pentapeptide) pyrophosphoryl-undecaprenol N-acetylglucosamine transferase from Nocardia farcinica (strain IFM 10152).